The sequence spans 125 residues: Protein ApaG (125 aa).

Residues 3–125 (TAVTEGIEVT…FPLVVPGSLN (123 aa)) form the ApaG domain.

This is Protein ApaG from Anaeromyxobacter dehalogenans (strain 2CP-1 / ATCC BAA-258).